A 216-amino-acid chain; its full sequence is 2,5-diamino-6-ribosylamino-4(3H)-pyrimidinone 5'-phosphate reductase (216 aa).

NADP(+)-binding positions include Thr51, Asp55, 79 to 82 (SMAR), Val126, and 148 to 151 (GSTL).

This sequence belongs to the HTP reductase family. As to quaternary structure, homodimer.

The enzyme catalyses 2,5-diamino-6-(1-D-ribitylamino)pyrimidin-4(3H)-one 5'-phosphate + NADP(+) = 2,5-diamino-6-(1-D-ribosylamino)pyrimidin-4(3H)-one 5'-phosphate + NADPH + H(+). It catalyses the reaction 2,5-diamino-6-(1-D-ribitylamino)pyrimidin-4(3H)-one 5'-phosphate + NAD(+) = 2,5-diamino-6-(1-D-ribosylamino)pyrimidin-4(3H)-one 5'-phosphate + NADH + H(+). It participates in cofactor biosynthesis; riboflavin biosynthesis. Catalyzes an early step in riboflavin biosynthesis, the NADPH-dependent reduction of the ribose side chain of 2,5-diamino-6-ribosylamino-4(3H)-pyrimidinone 5'-phosphate, yielding 2,5-diamino-6-ribitylamino-4(3H)-pyrimidinone 5'-phosphate. This is 2,5-diamino-6-ribosylamino-4(3H)-pyrimidinone 5'-phosphate reductase from Methanothermobacter thermautotrophicus (strain ATCC 29096 / DSM 1053 / JCM 10044 / NBRC 100330 / Delta H) (Methanobacterium thermoautotrophicum).